Here is a 396-residue protein sequence, read N- to C-terminus: Elongation factor Tu (396 aa).

A tr-type G domain is found at 10–206 (KEHVNIGTIG…AVDTWIETPV (197 aa)). The tract at residues 19-26 (GHVDHGKT) is G1. 19–26 (GHVDHGKT) is a GTP binding site. Thr26 contributes to the Mg(2+) binding site. The segment at 60–64 (GITIN) is G2. Positions 81–84 (DCPG) are G3. Residues 81–85 (DCPGH) and 136–139 (NKCD) contribute to the GTP site. Positions 136-139 (NKCD) are G4. Positions 176–178 (SAL) are G5.

This sequence belongs to the TRAFAC class translation factor GTPase superfamily. Classic translation factor GTPase family. EF-Tu/EF-1A subfamily. As to quaternary structure, monomer.

The protein localises to the cytoplasm. The catalysed reaction is GTP + H2O = GDP + phosphate + H(+). GTP hydrolase that promotes the GTP-dependent binding of aminoacyl-tRNA to the A-site of ribosomes during protein biosynthesis. This is Elongation factor Tu from Mycoplasmopsis agalactiae (strain NCTC 10123 / CIP 59.7 / PG2) (Mycoplasma agalactiae).